Reading from the N-terminus, the 421-residue chain is Thymidine phosphorylase (421 aa).

It belongs to the thymidine/pyrimidine-nucleoside phosphorylase family. Homodimer.

The enzyme catalyses thymidine + phosphate = 2-deoxy-alpha-D-ribose 1-phosphate + thymine. Its function is as follows. The enzymes which catalyze the reversible phosphorolysis of pyrimidine nucleosides are involved in the degradation of these compounds and in their utilization as carbon and energy sources, or in the rescue of pyrimidine bases for nucleotide synthesis. The chain is Thymidine phosphorylase (deoA) from Mycoplasma pneumoniae (strain ATCC 29342 / M129 / Subtype 1) (Mycoplasmoides pneumoniae).